Consider the following 1481-residue polypeptide: MALPREERSLHGHANIHVNQTTGPAIDKAESSDTIGADSEDGIEQEGQAKITTLARTLSRISQTNSGTEGLNPFLNTSDPELDPNSDQFNSRKWTKTLLHITSRDPERYPRRTAGVSFRNLNAFGYGTAADYQATVSNVWLKAAGWLRGLFGNGNKVRIDILRNFEGFVNSGEMLVVLGRPGSGCSTFLKTIAGETHGLWLDKGTDIQYQGISWDEMHSRFRGEVMYQAETEIHFPQLTAGDTLLFAAKARAPANRLPGVSRDQYATHMRDVVMAMLGLTHTMNTLVGNEFIRGVSGGERKRVSIAETTLCGSPLQCWDNSTRGLDSSTALEFVKNLRLSTDYTGSTAIVAIYQASQAIYDVFDKVIVLYEGRQIYFGRARDAKRFFIEMGFDCPERQTTGDFLTSLTSPTERLVRKGYEHLVPRTPDEFAARWRDSLERKQLLADIEAFQNEFPLGGSKKEEFSRSRAAEKAKNTRASSPYTLSYSMQIKLCLQRGFLRLKGDMSMTLSTVIGNSILALIISSVFYNLNETTDSYFSRGALLFFAILLNAFASALEMLTLWQQRPIVEKHDKYALYHPSAEAISSLIVDLPAKAPVSIVFNLILYFMTNLRRTPGHFFVFYLFSVTTTLTMSNVFRWIAAVSRSLAQAEVPASIFMMILMIYTGFTIPVRDMHPWFRWLNYINPIAYSFESLMINEFAGRKFHCATYVPSGPGYDNAPLDSKICSGKGAVAGQDYIDGDRYLEVAFEYYPSHLWRNFGILLGFLFFSLVAYIVASELVRAKPSKGEILVFPRGKIPAFAKKVHREADPEDVLTSEKLKVGSEQDDHVGAIVKQTSIFHWQDVCYDIKIKGQDRRILDHVDGWVKPGTLTALMGVTGAGKTSLLDVLANRVTMGVITGEMLVDGRMRDDSFQRKTGYVQQQDLHLETSTVREALIFSALLRQPASTPRKEKLAYVEEVIKMLNMEEYAEAVVGVLGEGLNVEQRKRLTIGVEIAAKPDLLLFFDEPTSGLDSQTAWSICSLMRKLVDHGQAILCTIHQPSAILMQQFDRLLFLAKGGKTVYFGDLGPNMRTLIKYFEDKGSPKCPPNANPAEWMLEVIGAAPGSRADQDWSDVWKHSRERAQVQQELLQMKQELLQRPQPPRTAGYGEFAMPLWAQFFICLQRVFQQYWRCPSYIYAKAAMCIIPPLFIGFTFWREPTSIQGMQNEMFSIFMLLVIFPNLVQQMMPYFAMQRSLYEVRERPSKAYSWKAFMLASIVVELPWNMLMAVPAYFCWYYPIGLFRNAYPTDSVTERGGTMFLLVLIFMLFTSTFSSMMIAGIDHPETASNIAQLMFSMCLIFCGVLASPDVLPRFWIFMWRASPFSYLVGSVLAVGIAGAPVHCSDIEVLHIPPPGGQNCSGYLEAFTTMAKSTLLNPEADSDCQVCSLSTTDQFLAGVHIKYSELWRNVGILFVYIVFNTVAAVFLYWLVRVPKKRALKKAKKE.

A compositionally biased stretch (basic and acidic residues) spans 1-10 (MALPREERSL). Disordered stretches follow at residues 1-45 (MALP…GIEQ) and 61-89 (ISQT…SDQF). Residues asparagine 19, asparagine 76, and asparagine 320 are each glycosylated (N-linked (GlcNAc...) asparagine). One can recognise an ABC transporter 1 domain in the interval 134-396 (ATVSNVWLKA…FIEMGFDCPE (263 aa)). Residues 507–527 (MTLSTVIGNSILALIISSVFY) form a helical membrane-spanning segment. Asparagine 530 carries an N-linked (GlcNAc...) asparagine glycan. 5 helical membrane passes run 542-562 (LLFF…LTLW), 587-607 (LIVD…ILYF), 616-636 (GHFF…SNVF), 650-670 (EVPA…TIPV), and 758-778 (FGIL…ASEL). The ABC transporter 2 domain occupies 838–1081 (FHWQDVCYDI…LIKYFEDKGS (244 aa)). Residue 874 to 881 (GVTGAGKT) participates in ATP binding. The next 6 membrane-spanning stretches (helical) occupy residues 1174–1194 (YIYA…FTFW), 1210–1230 (IFML…YFAM), 1249–1269 (AFML…AVPA), 1298–1318 (LLVL…IAGI), 1327–1347 (IAQL…SPDV), and 1358–1378 (ASPF…GAPV). Asparagine 1395 carries an N-linked (GlcNAc...) asparagine glycan. Residues 1446–1466 (VGILFVYIVFNTVAAVFLYWL) form a helical membrane-spanning segment.

It belongs to the ABC transporter superfamily. ABCG family. PDR (TC 3.A.1.205) subfamily.

Its subcellular location is the cell membrane. Its function is as follows. Pleiotropic ABC efflux transporter involved in the basal level of azole susceptibility. This chain is ABC multidrug transporter atrH, found in Aspergillus oryzae (strain ATCC 42149 / RIB 40) (Yellow koji mold).